A 484-amino-acid chain; its full sequence is uncharacterized protein (484 aa).

An HTH gntR-type domain is found at 14–82; sequence VPLHRQIEQY…KGGGTKVVNS (69 aa). Positions 42–61 form a DNA-binding region, H-T-H motif; sequence QRTLADMFQVNRSTVTAAID. The residue at position 327 (lysine 327) is an N6-(pyridoxal phosphate)lysine.

It in the C-terminal section; belongs to the class-I pyridoxal-phosphate-dependent aminotransferase family. The cofactor is pyridoxal 5'-phosphate.

This is an uncharacterized protein from Bacillus subtilis (strain 168).